A 447-amino-acid polypeptide reads, in one-letter code: UDP-N-acetyl-alpha-D-muramoyl-L-alanyl-L-glutamate epimerase (447 aa).

The protein belongs to the MurL family.

The catalysed reaction is UDP-N-acetyl-alpha-D-muramoyl-L-alanyl-L-glutamate + ATP + H2O = UDP-N-acetyl-alpha-D-muramoyl-L-alanyl-D-glutamate + AMP + diphosphate + H(+). The protein operates within cell wall biogenesis; peptidoglycan biosynthesis. Cell wall formation. Catalyzes epimerization of the terminal L-glutamate in UDP-N-acetyl-alpha-D-muramoyl-L-alanyl-L-glutamate. The sequence is that of UDP-N-acetyl-alpha-D-muramoyl-L-alanyl-L-glutamate epimerase from Micromonospora sp. (strain ATCC 39149 / NRRL 15099 / SCC 1413).